The chain runs to 349 residues: tRNA pseudouridine synthase D (349 aa).

A substrate-binding site is contributed by phenylalanine 27. Aspartate 80 functions as the Nucleophile in the catalytic mechanism. Asparagine 129 is a substrate binding site. The TRUD domain maps to 155-303 (GVPNYFGAQR…VEAARRAMLL (149 aa)). Position 329 (phenylalanine 329) interacts with substrate.

The protein belongs to the pseudouridine synthase TruD family.

The catalysed reaction is uridine(13) in tRNA = pseudouridine(13) in tRNA. In terms of biological role, responsible for synthesis of pseudouridine from uracil-13 in transfer RNAs. This Shigella dysenteriae serotype 1 (strain Sd197) protein is tRNA pseudouridine synthase D.